Here is a 248-residue protein sequence, read N- to C-terminus: MGGRDYTLYLFAALGSFLIVYIALPIIVIFTKQALDFRMLVKTIHDPLVIEALRNSLLTATATALISLLFGVPLGYVLARKDFRGKSLVQAIIDVPIVIPHSVVGIMLLVTFSNAILDSYKGIIAAMLFVSAPFAINSARDGFLAVDEKLEHVARTLGASKLRTFFSISLPIALPSIASGAIMAWARGISEVGAILIVAYYPKTAQVLVMEYFNNYGLRASRPISVILMGISLGIFVVLRWLIGKAKS.

The Cytoplasmic segment spans residues 1–9 (MGGRDYTLY). Residues 10–30 (LFAALGSFLIVYIALPIIVIF) traverse the membrane as a helical segment. Topologically, residues 31 to 56 (TKQALDFRMLVKTIHDPLVIEALRNS) are extracellular. The 187-residue stretch at 53–239 (LRNSLLTATA…GISLGIFVVL (187 aa)) folds into the ABC transmembrane type-1 domain. A helical membrane pass occupies residues 57–77 (LLTATATALISLLFGVPLGYV). Residues 78 to 91 (LARKDFRGKSLVQA) lie on the Cytoplasmic side of the membrane. A helical transmembrane segment spans residues 92–112 (IIDVPIVIPHSVVGIMLLVTF). Over 113-115 (SNA) the chain is Extracellular. A helical membrane pass occupies residues 116–136 (ILDSYKGIIAAMLFVSAPFAI). Over 137 to 164 (NSARDGFLAVDEKLEHVARTLGASKLRT) the chain is Cytoplasmic. Residues 165 to 185 (FFSISLPIALPSIASGAIMAW) form a helical membrane-spanning segment. The Extracellular portion of the chain corresponds to 186 to 223 (ARGISEVGAILIVAYYPKTAQVLVMEYFNNYGLRASRP). The chain crosses the membrane as a helical span at residues 224–244 (ISVILMGISLGIFVVLRWLIG). The Cytoplasmic portion of the chain corresponds to 245–248 (KAKS).

The protein belongs to the binding-protein-dependent transport system permease family. In terms of assembly, the complex is composed of two ATP-binding proteins (WtpC), two transmembrane proteins (WtpB) and a solute-binding protein (WtpA).

It localises to the cell membrane. Part of the ABC transporter complex WtpABC involved in molybdate/tungstate import. Probably responsible for the translocation of the substrate across the membrane. The chain is Molybdate/tungstate transport system permease protein WtpB (wtpB) from Pyrococcus abyssi (strain GE5 / Orsay).